The following is a 338-amino-acid chain: UDP-3-O-acylglucosamine N-acyltransferase (338 aa).

H239 (proton acceptor) is an active-site residue.

It belongs to the transferase hexapeptide repeat family. LpxD subfamily. Homotrimer.

It carries out the reaction a UDP-3-O-[(3R)-3-hydroxyacyl]-alpha-D-glucosamine + a (3R)-hydroxyacyl-[ACP] = a UDP-2-N,3-O-bis[(3R)-3-hydroxyacyl]-alpha-D-glucosamine + holo-[ACP] + H(+). It participates in bacterial outer membrane biogenesis; LPS lipid A biosynthesis. Functionally, catalyzes the N-acylation of UDP-3-O-acylglucosamine using 3-hydroxyacyl-ACP as the acyl donor. Is involved in the biosynthesis of lipid A, a phosphorylated glycolipid that anchors the lipopolysaccharide to the outer membrane of the cell. This is UDP-3-O-acylglucosamine N-acyltransferase from Xylella fastidiosa (strain 9a5c).